The primary structure comprises 158 residues: Encapsulin nanocompartment cargo protein EncB (158 aa).

Fe cation-binding residues include glutamate 22, glutamate 52, and histidine 55. 2 consecutive short sequence motifs (di-iron-binding motif) follow at residues 52–55 (EKEH) and 58–61 (EAVH). The segment at 92–158 (ATVHVPTPDG…RGGGGSGSGR (67 aa)) is disordered. A probable targeting peptide region spans residues 142–149 (LTVGSLRR). The span at 148 to 158 (RRGGGGSGSGR) shows a compositional bias: gly residues.

Belongs to the ferritin-like superfamily.

It localises to the encapsulin nanocompartment. Functionally, cargo protein of a type 1 encapsulin nanocompartment. May help nucleate Fe atoms in the interior of the encapsulin nanocompartment. Present in about 36 copies/encapsulin nanocompartment. In Myxococcus xanthus (strain DK1622), this protein is Encapsulin nanocompartment cargo protein EncB.